A 211-amino-acid polypeptide reads, in one-letter code: 3-demethoxyubiquinol 3-hydroxylase (211 aa).

The Fe cation site is built by glutamate 60, glutamate 90, histidine 93, glutamate 142, glutamate 174, and histidine 177.

This sequence belongs to the COQ7 family. Requires Fe cation as cofactor.

Its subcellular location is the cell membrane. It catalyses the reaction a 5-methoxy-2-methyl-3-(all-trans-polyprenyl)benzene-1,4-diol + AH2 + O2 = a 3-demethylubiquinol + A + H2O. The protein operates within cofactor biosynthesis; ubiquinone biosynthesis. Its function is as follows. Catalyzes the hydroxylation of 2-nonaprenyl-3-methyl-6-methoxy-1,4-benzoquinol during ubiquinone biosynthesis. The protein is 3-demethoxyubiquinol 3-hydroxylase of Francisella tularensis subsp. tularensis (strain FSC 198).